A 450-amino-acid polypeptide reads, in one-letter code: Tubulin alpha chain (450 aa).

An MREC motif motif is present at residues 1–4 (MREC). GTP is bound at residue glutamine 11. Lysine 40 is subject to N6-acetyllysine. GTP contacts are provided by glutamate 71, serine 140, glycine 144, threonine 145, threonine 179, asparagine 206, and asparagine 228. Glutamate 71 contributes to the Mg(2+) binding site. The active site involves glutamate 254. A 5-glutamyl polyglutamate modification is found at glutamate 444.

It belongs to the tubulin family. As to quaternary structure, dimer of alpha and beta chains. A typical microtubule is a hollow water-filled tube with an outer diameter of 25 nm and an inner diameter of 15 nM. Alpha-beta heterodimers associate head-to-tail to form protofilaments running lengthwise along the microtubule wall with the beta-tubulin subunit facing the microtubule plus end conferring a structural polarity. Microtubules usually have 13 protofilaments but different protofilament numbers can be found in some organisms and specialized cells. The cofactor is Mg(2+). In terms of processing, some glutamate residues at the C-terminus are polyglycylated, resulting in polyglycine chains on the gamma-carboxyl group. Glycylation is mainly limited to tubulin incorporated into axonemes (cilia and flagella) whereas glutamylation is prevalent in neuronal cells, centrioles, axonemes, and the mitotic spindle. Both modifications can coexist on the same protein on adjacent residues, and lowering polyglycylation levels increases polyglutamylation, and reciprocally. The precise function of polyglycylation is still unclear. Post-translationally, some glutamate residues at the C-terminus are polyglutamylated, resulting in polyglutamate chains on the gamma-carboxyl group. Polyglutamylation plays a key role in microtubule severing by spastin (SPAST). SPAST preferentially recognizes and acts on microtubules decorated with short polyglutamate tails: severing activity by SPAST increases as the number of glutamates per tubulin rises from one to eight, but decreases beyond this glutamylation threshold. Acetylation of alpha chains at Lys-40 is located inside the microtubule lumen. This modification has been correlated with increased microtubule stability, intracellular transport and ciliary assembly. In terms of processing, undergoes a tyrosination/detyrosination cycle, the cyclic removal and re-addition of a C-terminal tyrosine residue by the enzymes tubulin tyrosine carboxypeptidase (MATCAP, VASH1 or VASH2) and tubulin tyrosine ligase (TTL), respectively. Post-translationally, tyrosination promotes microtubule interaction with CAP-Gly microtubule plus-end tracking proteins. Tyrosinated tubulins regulate the initiation of dynein-driven motility. Detyrosination is involved in metaphase plate congression by guiding chromosomes during mitosis. Detyrosination increases microtubules-dependent mechanotransduction in dystrophic cardiac and skeletal muscle. In cardiomyocytes, detyrosinated microtubules are required to resist to contractile compression during contraction.

The protein resides in the cytoplasm. The protein localises to the cytoskeleton. It catalyses the reaction GTP + H2O = GDP + phosphate + H(+). Functionally, tubulin is the major constituent of microtubules, a cylinder consisting of laterally associated linear protofilaments composed of alpha- and beta-tubulin heterodimers. Microtubules grow by the addition of GTP-tubulin dimers to the microtubule end, where a stabilizing cap forms. Below the cap, tubulin dimers are in GDP-bound state, owing to GTPase activity of alpha-tubulin. The chain is Tubulin alpha chain from Notophthalmus viridescens (Eastern newt).